The chain runs to 443 residues: ATP-dependent protease ATPase subunit HslU (443 aa).

ATP-binding positions include I18, 60-65 (GVGKTE), D256, E321, and R393.

It belongs to the ClpX chaperone family. HslU subfamily. In terms of assembly, a double ring-shaped homohexamer of HslV is capped on each side by a ring-shaped HslU homohexamer. The assembly of the HslU/HslV complex is dependent on binding of ATP.

It localises to the cytoplasm. Its function is as follows. ATPase subunit of a proteasome-like degradation complex; this subunit has chaperone activity. The binding of ATP and its subsequent hydrolysis by HslU are essential for unfolding of protein substrates subsequently hydrolyzed by HslV. HslU recognizes the N-terminal part of its protein substrates and unfolds these before they are guided to HslV for hydrolysis. The sequence is that of ATP-dependent protease ATPase subunit HslU from Histophilus somni (strain 2336) (Haemophilus somnus).